We begin with the raw amino-acid sequence, 503 residues long: Cardiolipin synthase (503 aa).

The next 3 helical transmembrane spans lie at 5-25 (LNVL…RSFW), 29-49 (IVGA…IVIF), and 59-79 (LTWL…YLMF). 2 consecutive PLD phosphodiesterase domains span residues 238–265 (INYR…GDEY) and 416–443 (TRGF…DMRS). Catalysis depends on residues His-243, Lys-245, Asp-250, His-421, Lys-423, and Asp-428.

It belongs to the phospholipase D family. Cardiolipin synthase subfamily.

The protein resides in the cell membrane. It catalyses the reaction 2 a 1,2-diacyl-sn-glycero-3-phospho-(1'-sn-glycerol) = a cardiolipin + glycerol. Catalyzes the reversible phosphatidyl group transfer from one phosphatidylglycerol molecule to another to form cardiolipin (CL) (diphosphatidylglycerol) and glycerol. This Halalkalibacterium halodurans (strain ATCC BAA-125 / DSM 18197 / FERM 7344 / JCM 9153 / C-125) (Bacillus halodurans) protein is Cardiolipin synthase (cls).